Reading from the N-terminus, the 317-residue chain is MSVQGPQRRLLGSVNSTSPAAPRLGLAANQTGPRCLEVSVPDGLFLSLGLVSVVENVLVVAAIAKNRNLHSPMYYFICCLAVSDLLVSVSSVLETAVMLLLEAGTLAGRAAVVQQLDDIIDVLVCGAMVSSLCFLGAIAVDRYISIFYALRYHSIVTLPRAWRAISAIWVASVLSSTLFIAYYDHTAVLLCLVSFFVAMLVLMAVLYVHMLARACQHARGIARLHKRQRPVHQGLGLKGAATLTILLGIFFLCWGPFFLHLSLMVLCPRHPICGCVFKNFNLFLTLIICNSIVDPLIYAFRSQELRKTLREVLLCSW.

Topologically, residues methionine 1–glutamate 37 are extracellular. Asparagine 15 and asparagine 29 each carry an N-linked (GlcNAc...) asparagine glycan. Residues valine 38–isoleucine 63 form a helical membrane-spanning segment. The Cytoplasmic segment spans residues alanine 64–proline 72. A helical transmembrane segment spans residues methionine 73 to leucine 93. The Extracellular portion of the chain corresponds to glutamate 94–aspartate 118. The helical transmembrane segment at isoleucine 119–valine 140 threads the bilayer. Residues aspartate 141–arginine 163 are Cytoplasmic-facing. Residues alanine 164 to tyrosine 183 traverse the membrane as a helical segment. The Extracellular segment spans residues aspartate 184–cysteine 191. A helical transmembrane segment spans residues leucine 192–leucine 211. Over alanine 212–alanine 240 the chain is Cytoplasmic. A helical membrane pass occupies residues alanine 241–leucine 266. Over cysteine 267–asparagine 279 the chain is Extracellular. The helical transmembrane segment at phenylalanine 280–phenylalanine 300 threads the bilayer. Residues arginine 301–tryptophan 317 are Cytoplasmic-facing. The S-palmitoyl cysteine moiety is linked to residue cysteine 315.

This sequence belongs to the G-protein coupled receptor 1 family. In terms of assembly, interacts with MGRN1, but does not undergo MGRN1-mediated ubiquitination; this interaction competes with GNAS-binding and thus inhibits agonist-induced cAMP production. Interacts with OPN3; the interaction results in a decrease in MC1R-mediated cAMP signaling and ultimately a decrease in melanin production in melanocytes.

It localises to the cell membrane. Its function is as follows. Receptor for MSH (alpha, beta and gamma) and ACTH. The activity of this receptor is mediated by G proteins which activate adenylate cyclase. Mediates melanogenesis, the production of eumelanin (black/brown) and phaeomelanin (red/yellow), via regulation of cAMP signaling in melanocytes. The chain is Melanocyte-stimulating hormone receptor (MC1R) from Puma yagouaroundi (Jaguarundi).